A 182-amino-acid chain; its full sequence is Aralkylamine dehydrogenase light chain (182 aa).

Positions 1-47 (MRWLDKFGESLSRSVAHKTSRRSVLRSVGKLMVGSAFVLPVLPVARA) form a signal peptide, tat-type signal. 7 disulfides stabilise this stretch: cysteine 75/cysteine 140, cysteine 81/cysteine 113, cysteine 88/cysteine 171, cysteine 90/cysteine 138, cysteine 91/cysteine 135, cysteine 98/cysteine 129, and cysteine 130/cysteine 161. Residue aspartate 84 coordinates substrate. Tryptophan 109 (tryptophylquinone 6'-substrate hemiaminal intermediate) is an active-site residue. Tryptophan 109 is modified (tryptophylquinone). A cross-link (tryptophan tryptophylquinone (Trp-Trp)) is located at residues 109-160 (WIGTCHNPHDGKDYLISYHDCCGKTACGRCQCNTQTRERPGYEFFLHNDVNW). The active-site Proton acceptor is the aspartate 128. 156–158 (NDV) contacts substrate.

It belongs to the aromatic amine dehydrogenase light chain family. In terms of assembly, heterotetramer of two light and two heavy chains. Binds two azurin molecules per heterotetramer. The cofactor is tryptophan tryptophylquinone residue. Post-translationally, tryptophan tryptophylquinone (TTQ) is formed by oxidation of the indole ring of a tryptophan to form tryptophylquinone followed by covalent cross-linking with another tryptophan residue. Predicted to be exported by the Tat system. The position of the signal peptide cleavage has been experimentally proven.

The protein resides in the periplasm. The catalysed reaction is an aralkylamine + 2 oxidized [azurin] + H2O = an aromatic aldehyde + 2 reduced [azurin] + NH4(+) + 2 H(+). Irreversibly inhibited by phenylhydrazine, hydroxylamine, semicarbazide, hydrazine and aminoguanidine. Reversibly inhibited by isonicotinic acid hydrazide (isoniazid) and isonicotinic acid 2-isopropyl hydrazide (iproniazid). Oxidizes primary aromatic amines and, more slowly, some long-chain aliphatic amines, but not methylamine or ethylamine. Uses azurin as an electron acceptor to transfer electrons from the reduced tryptophylquinone cofactor. The protein is Aralkylamine dehydrogenase light chain of Alcaligenes faecalis.